A 202-amino-acid chain; its full sequence is Tetranectin (202 aa).

The first 21 residues, Met1 to Ala21, serve as a signal peptide directing secretion. Intrachain disulfides connect Cys71–Cys81, Cys98–Cys197, and Cys173–Cys189. Positions Val77 to Gln198 constitute a C-type lectin domain.

Homotrimer. Highest expression in lung, skeletal muscle and heart. Expressed in retina.

The protein localises to the secreted. Functionally, tetranectin binds to plasminogen and to isolated kringle 4. May be involved in the packaging of molecules destined for exocytosis. Plays a role in retinal function. The sequence is that of Tetranectin (Clec3b) from Mus musculus (Mouse).